Reading from the N-terminus, the 356-residue chain is MDTSRKIIHIDMDAFYASVEQRDHPEFRGKPLIIGGDPNKRGVVSTCSYEARKYGVHSAMPTRQAAKLCPNGIFIHGNMAHYVEVSSQIREIFSRYTDVIEPLSLDEAYLDVTENKKGMKSATMVARDIQQTIYRELGLTASAGVSFNKFIAKIASDFKKPAGITVVAPEEAEAFLEQIPVTKFYGVGKVTAEKLHRLGIETGADLKKWSEWDLIRELHKHGYQLYRHVRGRSNNIVNPHRDRKSVGKETTFEFNVLDNRILEQSLMKFAKKVEERLIKLQKHGKTVVLKLRYSDFTTITKRLTLNEYTNDANQIYQAAALLLRESYKGQDSIRLIGLTVTNLKPVYFENLRLEGL.

A UmuC domain is found at 7-188; sequence IIHIDMDAFY…IPVTKFYGVG (182 aa). D11 and D106 together coordinate Mg(2+). E107 is a catalytic residue.

Belongs to the DNA polymerase type-Y family. Monomer. Mg(2+) is required as a cofactor.

Its subcellular location is the cytoplasm. The catalysed reaction is DNA(n) + a 2'-deoxyribonucleoside 5'-triphosphate = DNA(n+1) + diphosphate. Poorly processive, error-prone DNA polymerase involved in untargeted mutagenesis. Copies undamaged DNA at stalled replication forks, which arise in vivo from mismatched or misaligned primer ends. These misaligned primers can be extended by PolIV. Exhibits no 3'-5' exonuclease (proofreading) activity. May be involved in translesional synthesis, in conjunction with the beta clamp from PolIII. The sequence is that of DNA polymerase IV from Listeria monocytogenes serotype 4a (strain HCC23).